Consider the following 507-residue polypeptide: MQQAIEQTSINGALRFNGIGKVFPGVKALSDISFEARPGSVHALMGENGAGKSTLLKILGGSYQPNSGTLQIGEQSYQFKSTAESIAAGVAVIHQELHLVPEMTVAENLLLGHMPNRFGLINRGAMYRRAGELLKGLADEIDPRTRLGDLSLGQRQLVEIAKAMSRNAHVIAFDEPTSSLSAREIDRLMAIIVRLRDEGRVILYVSHRMEEIFRVCDAVTVFKDGRFVKTFEQMADLDHDRLVTCMVGRDIQNIYNYRPRQHQGPSLRVTGLLGPGLHEPVSFAVEKGEVLGFFGLVGAGRTELFRLLSGLTRSTAGTLQLDGKPLTLKSPRDSIEAGILLCPEDRKKEGIVPLSSVAENINIGARPRHVNLGCLIQGRWERDNARSQIKSMNVKTPSPEQQIMFLSGGNQQKAILGRWLSMPMKVLLLDEPTRGIDVGAKSEIYEIIHNLAADGIAVIVVSSDLMEVMGISDRILVMSEGAITGELNRDEADESRLLQLALPRTRS.

2 consecutive ABC transporter domains span residues 14 to 249 (LRFN…MVGR) and 249 to 505 (RDIQ…LPRT). 46–53 (GENGAGKS) contacts ATP.

It belongs to the ABC transporter superfamily. Arabinose importer (TC 3.A.1.2.2) family. As to quaternary structure, the complex is composed of two ATP-binding proteins (AraG), two transmembrane proteins (AraH) and a solute-binding protein (AraF).

It localises to the cell inner membrane. The catalysed reaction is L-arabinose(out) + ATP + H2O = L-arabinose(in) + ADP + phosphate + H(+). Part of the ABC transporter complex AraFGH involved in arabinose import. Responsible for energy coupling to the transport system. The polypeptide is Arabinose import ATP-binding protein AraG (Pseudomonas savastanoi pv. phaseolicola (strain 1448A / Race 6) (Pseudomonas syringae pv. phaseolicola (strain 1448A / Race 6))).